The following is a 176-amino-acid chain: Ribosome rescue factor SmrB (176 aa).

The 76-residue stretch at 97–172 (LDMHGMTQQE…GDGALLVLLS (76 aa)) folds into the Smr domain.

The protein belongs to the SmrB family. In terms of assembly, associates with collided ribosomes, but not with correctly translating polysomes.

Its function is as follows. Acts as a ribosome collision sensor. Detects stalled/collided disomes (pairs of ribosomes where the leading ribosome is stalled and a second ribosome has collided with it) and endonucleolytically cleaves mRNA at the 5' boundary of the stalled ribosome. Stalled/collided disomes form a new interface (primarily via the 30S subunits) that binds SmrB. Cleaved mRNA becomes available for tmRNA ligation, leading to ribosomal subunit dissociation and rescue of stalled ribosomes. This Vibrio vulnificus (strain YJ016) protein is Ribosome rescue factor SmrB.